Reading from the N-terminus, the 245-residue chain is 1-(5-phosphoribosyl)-5-[(5-phosphoribosylamino)methylideneamino] imidazole-4-carboxamide isomerase (245 aa).

The active-site Proton acceptor is the Asp-8. The active-site Proton donor is Asp-131.

This sequence belongs to the HisA/HisF family.

The protein localises to the cytoplasm. The catalysed reaction is 1-(5-phospho-beta-D-ribosyl)-5-[(5-phospho-beta-D-ribosylamino)methylideneamino]imidazole-4-carboxamide = 5-[(5-phospho-1-deoxy-D-ribulos-1-ylimino)methylamino]-1-(5-phospho-beta-D-ribosyl)imidazole-4-carboxamide. It participates in amino-acid biosynthesis; L-histidine biosynthesis; L-histidine from 5-phospho-alpha-D-ribose 1-diphosphate: step 4/9. This Neisseria gonorrhoeae (strain NCCP11945) protein is 1-(5-phosphoribosyl)-5-[(5-phosphoribosylamino)methylideneamino] imidazole-4-carboxamide isomerase.